The following is a 415-amino-acid chain: MKKKLALLLLPFILISCNGLGSKSVKNIVDLTPKLVIQTNEPIYLDSNTKIYPFNVNMLKNKQYSPAKSKMIAEPVFIGDMIYTLDIRANISAFSIEKNKIIWSYNLSKHKKDNYIGGGILHHNGKLYITYGARLLIVLDAKSGYEIIRKELPDIIRIKPIALNDHTILVQTISNQTIALDSETLKTLWDHESIAEILSTSYSMIPIVQHDNVIVTYNTGQVLALNIKNGEVKWNFEFTNLNDHTAIPNFDTSSILCTPVHDSMNLYIATGLGKLIKLNLLTGSVLWQINADDIQSMSLIGNSLFIINNARQIAALNPETGKVKFVADLNYEKNDKRLKSTTFLVPFVGVDNNNQRSLNVISVDGILYNFNIDSNGLKMNPHIIKIIKNIRYYGLRSNNTLYFSTDRQVIFGSQI.

This is an uncharacterized protein from Rickettsia prowazekii (strain Madrid E).